The chain runs to 425 residues: Enolase (425 aa).

(2R)-2-phosphoglycerate is bound at residue glutamine 164. Catalysis depends on glutamate 208, which acts as the Proton donor. Mg(2+) is bound by residues aspartate 243, glutamate 286, and aspartate 312. The (2R)-2-phosphoglycerate site is built by lysine 337, arginine 366, serine 367, and lysine 388. Lysine 337 functions as the Proton acceptor in the catalytic mechanism.

It belongs to the enolase family. Requires Mg(2+) as cofactor.

It is found in the cytoplasm. Its subcellular location is the secreted. The protein localises to the cell surface. It catalyses the reaction (2R)-2-phosphoglycerate = phosphoenolpyruvate + H2O. Its pathway is carbohydrate degradation; glycolysis; pyruvate from D-glyceraldehyde 3-phosphate: step 4/5. Its function is as follows. Catalyzes the reversible conversion of 2-phosphoglycerate (2-PG) into phosphoenolpyruvate (PEP). It is essential for the degradation of carbohydrates via glycolysis. In Methanococcus aeolicus (strain ATCC BAA-1280 / DSM 17508 / OCM 812 / Nankai-3), this protein is Enolase.